The primary structure comprises 761 residues: Translation initiation factor IF-2 (761 aa).

The disordered stretch occupies residues 39-179 (DEETLNKAKQ…KVNHQQMPLP (141 aa)). Residues 45–105 (KAKQAGKPAA…NNQQSQSQGQ (61 aa)) are compositionally biased toward low complexity. The segment covering 106–120 (TKRPSQASNNQSGAA) has biased composition (polar residues). Residues 142–154 (PGSNNRRPGNNQN) are compositionally biased toward low complexity. A compositionally biased stretch (basic residues) spans 155–168 (RRNHGNRGGKRRPQ). The region spanning 262-435 (ERPPVVTIMG…EVEEFKANPD (174 aa)) is the tr-type G domain. The interval 271-278 (GHVDHGKT) is G1. 271-278 (GHVDHGKT) is a GTP binding site. Positions 296 to 300 (GITQH) are G2. The interval 317 to 320 (DTPG) is G3. Residues 317–321 (DTPGH) and 371–374 (NKID) each bind GTP. The interval 371-374 (NKID) is G4. Residues 407-409 (SAL) form a G5 region.

It belongs to the TRAFAC class translation factor GTPase superfamily. Classic translation factor GTPase family. IF-2 subfamily.

The protein localises to the cytoplasm. Functionally, one of the essential components for the initiation of protein synthesis. Protects formylmethionyl-tRNA from spontaneous hydrolysis and promotes its binding to the 30S ribosomal subunits. Also involved in the hydrolysis of GTP during the formation of the 70S ribosomal complex. This chain is Translation initiation factor IF-2, found in Shouchella clausii (strain KSM-K16) (Alkalihalobacillus clausii).